We begin with the raw amino-acid sequence, 469 residues long: tRNA(Ile)-lysidine synthase (469 aa).

Position 26–31 (26–31 (SGGPDS)) interacts with ATP.

Belongs to the tRNA(Ile)-lysidine synthase family.

It is found in the cytoplasm. The enzyme catalyses cytidine(34) in tRNA(Ile2) + L-lysine + ATP = lysidine(34) in tRNA(Ile2) + AMP + diphosphate + H(+). Ligates lysine onto the cytidine present at position 34 of the AUA codon-specific tRNA(Ile) that contains the anticodon CAU, in an ATP-dependent manner. Cytidine is converted to lysidine, thus changing the amino acid specificity of the tRNA from methionine to isoleucine. This chain is tRNA(Ile)-lysidine synthase, found in Clostridium perfringens (strain 13 / Type A).